A 220-amino-acid chain; its full sequence is Large ribosomal subunit protein bL25 (220 aa).

It belongs to the bacterial ribosomal protein bL25 family. CTC subfamily. As to quaternary structure, part of the 50S ribosomal subunit; part of the 5S rRNA/L5/L18/L25 subcomplex. Contacts the 5S rRNA. Binds to the 5S rRNA independently of L5 and L18.

Functionally, this is one of the proteins that binds to the 5S RNA in the ribosome where it forms part of the central protuberance. The chain is Large ribosomal subunit protein bL25 from Zymomonas mobilis subsp. mobilis (strain ATCC 31821 / ZM4 / CP4).